The chain runs to 977 residues: DNA-directed RNA polymerase 3A, chloroplastic (977 aa).

The N-terminal 72 residues, 1-72 (MASTASYSPS…NNIQSQTTVC (72 aa)), are a transit peptide targeting the chloroplast. Catalysis depends on residues D678, K753, and D910.

The protein belongs to the phage and mitochondrial RNA polymerase family.

It is found in the plastid. The protein resides in the chloroplast. The catalysed reaction is RNA(n) + a ribonucleoside 5'-triphosphate = RNA(n+1) + diphosphate. Functionally, DNA-dependent RNA polymerase catalyzes the transcription of DNA into RNA using the four ribonucleoside triphosphates as substrates. This is DNA-directed RNA polymerase 3A, chloroplastic (RPOT3-SYL) from Nicotiana tabacum (Common tobacco).